The chain runs to 646 residues: Preterminal protein (646 aa).

The Nuclear localization signal signature appears at 357–366; the sequence is RLPVRRRRRR. An O-(5'-phospho-DNA)-serine modification is found at S555. Positions 619–646 are disordered; the sequence is LHADVPLPPLQANPHPPLPPDARPQRTM. Residues 624 to 640 are compositionally biased toward pro residues; that stretch reads PLPPLQANPHPPLPPDA.

This sequence belongs to the adenoviridae terminal protein family. As to quaternary structure, heterodimer with the polymerase; this heterodimer binds to bp 9 to 18 of the genome. Interacts with host POU2F1; POU2F1 binds to the auxiliary sequences in the inverted terminal repeats and tethers the pTP-POL heterodimer to the origin DNA thereby participating in the assembly of the pre-initiation complex (POL-TP-DBP-NFIA-POU2F1). In terms of processing, preterminal protein is used to replicate viral genome, upon genomic encapsidation it is processed first into iTP and finally into TP by adenovirus protease.

The protein resides in the host nucleus matrix. Its function is as follows. Protein covalently bound to the viral DNA that acts as a primer for viral genomic replication by DNA strand displacement. Assembles on the viral origin of replication in an initiation complex with viral polymerase, DBP, host NFIA and host POU2F1/OCT1. During initiation, the polymerase covalently couples the first dCTP with Ser-580 of pTP. The terminal protein stimulates the template activity over 20 fold compared to protein-free templates. Neo-synthesized viral genomes are linked to two preterminal proteins, one for each 5' end. These new genomes are encapsidated in the nucleus, and during capsid maturation by viral protease, preterminal protein is first cleaved into intermediary (iTP), then into mature TP. May play a role in host nuclear matrix localization of genomic DNA. The chain is Preterminal protein from Homo sapiens (Human).